A 249-amino-acid chain; its full sequence is tRNA (guanine-N(1)-)-methyltransferase (249 aa).

S-adenosyl-L-methionine-binding positions include Gly113 and 133–138 (IGDFVV).

It belongs to the RNA methyltransferase TrmD family. As to quaternary structure, homodimer.

The protein localises to the cytoplasm. It carries out the reaction guanosine(37) in tRNA + S-adenosyl-L-methionine = N(1)-methylguanosine(37) in tRNA + S-adenosyl-L-homocysteine + H(+). In terms of biological role, specifically methylates guanosine-37 in various tRNAs. The sequence is that of tRNA (guanine-N(1)-)-methyltransferase from Neisseria meningitidis serogroup C / serotype 2a (strain ATCC 700532 / DSM 15464 / FAM18).